The chain runs to 433 residues: GTPase Obg (433 aa).

Positions 2–160 (PTFVDQTKIE…RVLRLELKLL (159 aa)) constitute an Obg domain. Positions 161–334 (ADVGLVGFPS…LMNDTATLVE (174 aa)) constitute an OBG-type G domain. GTP-binding positions include 167 to 174 (GFPSVGKS), 192 to 196 (FTTLT), 214 to 217 (DLPG), 284 to 287 (SQMD), and 315 to 317 (SSV). Ser174 and Thr194 together coordinate Mg(2+). The OCT domain maps to 355-433 (YKAPQRNEFM…IGKFVFEFVQ (79 aa)).

It belongs to the TRAFAC class OBG-HflX-like GTPase superfamily. OBG GTPase family. Monomer. Requires Mg(2+) as cofactor.

The protein resides in the cytoplasm. Its function is as follows. An essential GTPase which binds GTP, GDP and possibly (p)ppGpp with moderate affinity, with high nucleotide exchange rates and a fairly low GTP hydrolysis rate. Plays a role in control of the cell cycle, stress response, ribosome biogenesis and in those bacteria that undergo differentiation, in morphogenesis control. The chain is GTPase Obg from Lactobacillus acidophilus (strain ATCC 700396 / NCK56 / N2 / NCFM).